Here is a 245-residue protein sequence, read N- to C-terminus: Inner membrane protein YgaZ (245 aa).

Residues Met1–Pro24 are Cytoplasmic-facing. Residues Ile25 to Phe45 form a helical membrane-spanning segment. Residues Ser46 to Gln63 are Periplasmic-facing. Residues Phe64 to Met84 form a helical membrane-spanning segment. Residues Ala85 to Lys109 lie on the Cytoplasmic side of the membrane. The helical transmembrane segment at Thr110–Val130 threads the bilayer. The Periplasmic segment spans residues Arg131–Trp140. The chain crosses the membrane as a helical span at residues Met141–Phe161. Residues Ser162–Ala172 are Cytoplasmic-facing. A helical membrane pass occupies residues Val173–Phe193. Residues Gln194–Leu205 lie on the Periplasmic side of the membrane. The helical transmembrane segment at Val206–Val226 threads the bilayer. Topologically, residues Cys227–Leu245 are cytoplasmic.

The protein belongs to the AzlC family.

The protein localises to the cell inner membrane. This chain is Inner membrane protein YgaZ (ygaZ), found in Escherichia coli (strain K12).